Reading from the N-terminus, the 398-residue chain is Secreted aspartic protease 3 (398 aa).

Residues 1 to 18 (MFLKNIFIALAIALLADA) form the signal peptide. A propeptide spans 19 to 58 (TPTTFNNSPGFVALNFDVIKTHKNVTGPQGEINTNVNVKR) (activation peptide). N-linked (GlcNAc...) asparagine glycosylation occurs at Asn42. Residues 72–384 (YASDITVGSN…DLDDNEISLA (313 aa)) form the Peptidase A1 domain. The active site involves Asp90. 90 to 92 (DTG) contributes to the pepstatin A binding site. Polar residues predominate over residues 103 to 112 (VSCQAGQGQD). The segment at 103–139 (VSCQAGQGQDPNFCKNEGTYSPSSSSSSQNLNSPFSI) is disordered. Cys105 and Cys116 are disulfide-bonded. Over residues 123 to 138 (SPSSSSSSQNLNSPFS) the composition is skewed to low complexity. 140–143 (EYGD) is a binding site for pepstatin A. Zn(2+)-binding residues include His188, Asp248, His254, and Asp270. Asp274 is a catalytic residue. 274–278 (DSGTT) contacts pepstatin A. An intrachain disulfide couples Cys312 to Cys350. Asn313 carries N-linked (GlcNAc...) asparagine glycosylation.

It belongs to the peptidase A1 family. Monomer.

Its subcellular location is the secreted. It carries out the reaction Preferential cleavage at the carboxyl of hydrophobic amino acids, but fails to cleave 15-Leu-|-Tyr-16, 16-Tyr-|-Leu-17 and 24-Phe-|-Phe-25 of insulin B chain. Activates trypsinogen, and degrades keratin.. Its activity is regulated as follows. Inhibited by pepstatin A analogs. Secreted aspartic peptidases (SAPs) are a group of ten acidic hydrolases considered as key virulence factors. These enzymes supply the fungus with nutrient amino acids as well as are able to degrade the selected host's proteins involved in the immune defense. Induces host inflammatory cytokine production in a proteolytic activity-independent way. Moreover, acts toward human hemoglobin though limited proteolysis to generate a variety of antimicrobial hemocidins, enabling to compete with the other microorganisms of the same physiological niche using the microbicidal peptides generated from the host protein. Its function is as follows. Plays a key role in defense against host by cleaving histatin-5 (Hst 5), a peptide from human saliva that carries out fungicidal activity. The cleavage rate decreases in an order of SAP2 &gt; SAP9 &gt; SAP3 &gt; SAP7 &gt; SAP4 &gt; SAP1 &gt; SAP8. The first cleavage occurs between residues 'Lys-17' and 'His-18' of Hst 5, giving DSHAKRHHGYKRKFHEK and HHSHRGY peptides. Simultaneously, the DSHAKRHHGYKRK peptide is also formed. Further fragmentation by SAP3 results in DSHAKRHHGY and KRKFHEK products. The sequence is that of Secreted aspartic protease 3 from Candida albicans (strain SC5314 / ATCC MYA-2876) (Yeast).